The following is a 402-amino-acid chain: Odorant receptor 22c (402 aa).

Residues Met1 to His42 are Cytoplasmic-facing. The chain crosses the membrane as a helical span at residues Leu43–Gly63. The Extracellular segment spans residues Cys64–Ala73. A helical membrane pass occupies residues Leu74–Phe94. Residues Arg95–Ser134 are Cytoplasmic-facing. The chain crosses the membrane as a helical span at residues Leu135–Met155. The Extracellular portion of the chain corresponds to Gly156–Asn173. Residues Ile174 to Thr194 traverse the membrane as a helical segment. The Cytoplasmic portion of the chain corresponds to Ala195–Val201. The helical transmembrane segment at Phe202–Phe222 threads the bilayer. Residues Arg223 to Gln276 lie on the Extracellular side of the membrane. A helical membrane pass occupies residues Phe277–Leu297. Residues Asp298 to Ser307 are Cytoplasmic-facing. Residues Gly308–Gly328 traverse the membrane as a helical segment. Residues Gly329–Leu402 are Extracellular-facing.

It belongs to the insect chemoreceptor superfamily. Heteromeric odorant receptor channel (TC 1.A.69) family. Or1a subfamily. In terms of assembly, interacts with Orco. Complexes exist early in the endomembrane system in olfactory sensory neurons (OSNs), coupling these complexes to the conserved ciliary trafficking pathway. As to expression, not expressed in either the antenna or maxillary palp.

It is found in the cell membrane. Odorant receptor which mediates acceptance or avoidance behavior, depending on its substrates. The odorant receptor repertoire encodes a large collection of odor stimuli that vary widely in identity, intensity, and duration. May form a complex with Orco to form odorant-sensing units, providing sensitive and prolonged odorant signaling and calcium permeability. This chain is Odorant receptor 22c (Or22c), found in Drosophila melanogaster (Fruit fly).